The primary structure comprises 432 residues: Adenylosuccinate synthetase (432 aa).

GTP is bound by residues 13–19 (GDEGKGK) and 41–43 (GHT). Asp14 (proton acceptor) is an active-site residue. Mg(2+) contacts are provided by Asp14 and Gly41. Residues 14 to 17 (DEGK), 39 to 42 (NAGH), Thr131, Arg145, Gln226, Thr241, and Arg305 contribute to the IMP site. Residue His42 is the Proton donor of the active site. 301–307 (SVTGRAR) serves as a coordination point for substrate. GTP-binding positions include Arg307, 333 to 335 (KLD), and 416 to 418 (STG).

The protein belongs to the adenylosuccinate synthetase family. As to quaternary structure, homodimer. The cofactor is Mg(2+).

It localises to the cytoplasm. The catalysed reaction is IMP + L-aspartate + GTP = N(6)-(1,2-dicarboxyethyl)-AMP + GDP + phosphate + 2 H(+). Its pathway is purine metabolism; AMP biosynthesis via de novo pathway; AMP from IMP: step 1/2. Plays an important role in the de novo pathway of purine nucleotide biosynthesis. Catalyzes the first committed step in the biosynthesis of AMP from IMP. This is Adenylosuccinate synthetase from Neisseria gonorrhoeae (strain ATCC 700825 / FA 1090).